The chain runs to 347 residues: MKPPILLIILLTMISGTMIVLTSSHWLTIWIGLEMNMLAIIPILMKKSNPRAIEASTKYLLTQATASMILMMGITINLMFSGQWATSKTLCPTTSAMVTTALAMKLGLAPFHFWVPEVTQGTHLSSGLILLTWQKIAPLSVLYQTSPTIDPNLLLPMAITSILIGGWGGLNQTQLRKILAYSSIAHMGWMTAVTLYNPTMMLLNLTIYIIMTTTTFMLFMYNSTTTTLSLSQTWNKAPLITPLILMLMLSLGGLPPLSGFIPKWMIIQELTKNEMIIIPTIMAITALLNLYFYMRLTYSTTLTMFPSTNNMKMKWKFDNMKKMILLSPLTVVSTMLLPITPLLSILD.

10 helical membrane passes run 3-23 (PPIL…VLTS), 25-45 (HWLT…PILM), 60-80 (LLTQ…NLMF), 96-116 (AMVT…FWVP), 149-169 (IDPN…GWGG), 178-198 (ILAY…LYNP), 200-220 (MMLL…MLFM), 237-257 (APLI…LPPL), 274-294 (EMII…YFYM), and 323-343 (MILL…TPLL).

It belongs to the complex I subunit 2 family. Core subunit of respiratory chain NADH dehydrogenase (Complex I) which is composed of 45 different subunits. Interacts with TMEM242.

Its subcellular location is the mitochondrion inner membrane. It catalyses the reaction a ubiquinone + NADH + 5 H(+)(in) = a ubiquinol + NAD(+) + 4 H(+)(out). Its function is as follows. Core subunit of the mitochondrial membrane respiratory chain NADH dehydrogenase (Complex I) which catalyzes electron transfer from NADH through the respiratory chain, using ubiquinone as an electron acceptor. Essential for the catalytic activity and assembly of complex I. This is NADH-ubiquinone oxidoreductase chain 2 from Mungos mungo (Banded mongoose).